Reading from the N-terminus, the 518-residue chain is Cytochrome P450 736A117 (518 aa).

Asn-12 carries an N-linked (GlcNAc...) asparagine glycan. A helical membrane pass occupies residues 17–37 (FLQPLAFTLLAIFLVLLYTWY). 3 N-linked (GlcNAc...) asparagine glycosylation sites follow: Asn-185, Asn-275, and Asn-356. Cys-460 contacts heme.

The protein belongs to the cytochrome P450 family. Heme is required as a cofactor. As to expression, expressed at similar levels in fruit kernel, seedlings, leaves, stems and buds.

The protein resides in the membrane. This Prunus mume (Japanese apricot) protein is Cytochrome P450 736A117.